The chain runs to 745 residues: Poly(A) polymerase alpha (745 aa).

Residues 1–17 are compositionally biased toward low complexity; the sequence is MPFPVTTQGSQQTQPPQ. Residues 1–22 are disordered; sequence MPFPVTTQGSQQTQPPQKHYGI. A phosphoserine mark is found at serine 10 and serine 24. Residues 100–102, threonine 109, 113–115, aspartate 167, lysine 228, tyrosine 237, and 246–247 each bind ATP; these read FGS, DID, and GV. Aspartate 113, aspartate 115, and aspartate 167 together coordinate Mg(2+). Residues lysine 444, lysine 445, lysine 506, and lysine 507 each participate in a glycyl lysine isopeptide (Lys-Gly) (interchain with G-Cter in SUMO) cross-link. A Nuclear localization signal 1 motif is present at residues 490 to 507; sequence RKQLHQLLPNHVLQKKKK. Residues 508–643 form a ser/Thr-rich region; it reads HSTEGVKLTA…TSGNAATKIP (136 aa). Residues 523-534 show a composition bias toward low complexity; the sequence is LDLSMDSDNSMS. Disordered stretches follow at residues 523-565 and 577-704; these read LDLS…AVTA and SVPQ…SETI. Over residues 535 to 557 the composition is skewed to polar residues; it reads VPSPTSATKTSPLNSSGSSQGRN. 2 positions are modified to phosphoserine: serine 537 and serine 558. 2 stretches are compositionally biased toward low complexity: residues 583–594 and 611–640; these read SSESSGGTSSES and TVSRVVSSTRLVNPPPRSSGNAATSGNAAT. N6-acetyllysine is present on residues lysine 641 and lysine 650. The Nuclear localization signal 2 motif lies at 650 to 665; the sequence is KRTSSPHKEESPKKTK. 2 stretches are compositionally biased toward basic and acidic residues: residues 655-666 and 682-692; these read PHKEESPKKTKT and GHDKTEAKEQL. Positions 677-745 are required for interaction with NUDT21; sequence CLALSGHDKT…KNSIKLRLNR (69 aa). Residues 694 to 704 show a composition bias toward low complexity; the sequence is TETSTTQSETI. The residue at position 736 (lysine 736) is an N6-acetyllysine; alternate. Lysine 736 is covalently cross-linked (Glycyl lysine isopeptide (Lys-Gly) (interchain with G-Cter in SUMO); alternate). At serine 738 the chain carries Phosphoserine. At lysine 740 the chain carries N6-acetyllysine; alternate. Lysine 740 is covalently cross-linked (Glycyl lysine isopeptide (Lys-Gly) (interchain with G-Cter in SUMO); alternate).

The protein belongs to the poly(A) polymerase family. As to quaternary structure, monomer. Found in a complex with CPSF1, FIP1L1 and PAPOLA. Interacts with AHCYL1 and FIP1L1; the interaction with AHCYL1 seems to increase interaction with FIP1L1. Interacts with NUDT21; the interaction is diminished by acetylation. Interacts with KPNB1; the interaction promotes PAP nuclear import and is inhibited by acetylation of PAP. Requires Mg(2+) as cofactor. It depends on Mn(2+) as a cofactor. Polysumoylated. Varying sumoylation depending on tissue- and cell-type. Highly sumoylated in bladder and NIH 3T3 cells. Sumoylation is required for nuclear localization and enhances PAP stability. Desumoylated by SENP1. Inhibits polymerase activity. In terms of processing, hyperphosphorylation on multiple CDK2 consensus and non-consensus sites in the C-terminal Ser/Thr-rich region represses PAP activity in late M-phase. Phosphorylation/dephosphorylation may regulate the interaction between PAP and CPSF. Post-translationally, acetylated in the C-terminus. Acetylation decreases interaction with NUDT21 and KPNB1, and inhibits nuclear localization through inhibiting binding to the importin alpha/beta complex.

It localises to the cytoplasm. The protein localises to the nucleus. It catalyses the reaction RNA(n) + ATP = RNA(n)-3'-adenine ribonucleotide + diphosphate. Its function is as follows. Polymerase that creates the 3'-poly(A) tail of mRNA's. Also required for the endoribonucleolytic cleavage reaction at some polyadenylation sites. May acquire specificity through interaction with a cleavage and polyadenylation specificity factor (CPSF) at its C-terminus. The chain is Poly(A) polymerase alpha (PAPOLA) from Homo sapiens (Human).